The following is a 176-amino-acid chain: Large ribosomal subunit protein uL6 (176 aa).

This sequence belongs to the universal ribosomal protein uL6 family. In terms of assembly, part of the 50S ribosomal subunit.

In terms of biological role, this protein binds to the 23S rRNA, and is important in its secondary structure. It is located near the subunit interface in the base of the L7/L12 stalk, and near the tRNA binding site of the peptidyltransferase center. This chain is Large ribosomal subunit protein uL6, found in Burkholderia multivorans (strain ATCC 17616 / 249).